Consider the following 212-residue polypeptide: Large ribosomal subunit protein uL3 (212 aa).

At Gln-153 the chain carries N5-methylglutamine.

It belongs to the universal ribosomal protein uL3 family. Part of the 50S ribosomal subunit. Forms a cluster with proteins L14 and L19. In terms of processing, methylated by PrmB.

One of the primary rRNA binding proteins, it binds directly near the 3'-end of the 23S rRNA, where it nucleates assembly of the 50S subunit. This Colwellia psychrerythraea (strain 34H / ATCC BAA-681) (Vibrio psychroerythus) protein is Large ribosomal subunit protein uL3.